We begin with the raw amino-acid sequence, 313 residues long: Ribosomal RNA small subunit methyltransferase H (313 aa).

S-adenosyl-L-methionine contacts are provided by residues 35-37, aspartate 55, phenylalanine 80, aspartate 102, and glutamine 109; that span reads GGH.

Belongs to the methyltransferase superfamily. RsmH family.

It localises to the cytoplasm. The enzyme catalyses cytidine(1402) in 16S rRNA + S-adenosyl-L-methionine = N(4)-methylcytidine(1402) in 16S rRNA + S-adenosyl-L-homocysteine + H(+). Specifically methylates the N4 position of cytidine in position 1402 (C1402) of 16S rRNA. The protein is Ribosomal RNA small subunit methyltransferase H of Shewanella denitrificans (strain OS217 / ATCC BAA-1090 / DSM 15013).